The primary structure comprises 212 residues: Ribonuclease HII (212 aa).

The RNase H type-2 domain occupies 18–212 (GCVFGVDEAG…APVAQQELFR (195 aa)). The a divalent metal cation site is built by Asp-24, Glu-25, and Asp-118.

This sequence belongs to the RNase HII family. It depends on Mn(2+) as a cofactor. Requires Mg(2+) as cofactor.

The protein resides in the cytoplasm. It catalyses the reaction Endonucleolytic cleavage to 5'-phosphomonoester.. Endonuclease that specifically degrades the RNA of RNA-DNA hybrids. This is Ribonuclease HII from Erythrobacter litoralis (strain HTCC2594).